The chain runs to 277 residues: MIIELAKNYGFCFGVKRAIKKAEQIKDAATIGPLIHNNEEISRLQKNFNVKTLENIQALSNEKKAIIRTHGITKQDLEELRKKDIEIFDATCPFVTKPQQICEQMSKEGYEVVIFGDENHPEVKGVKSYVSTKAYVVLDKKELQNIKLPNKIAVVSQTTKKPEHFMEIVNFLILKTKEVRVFNTICDATFKNQDAIKELSLKSDVMVVVGGKNSANTKQLFLIAKTNCEDSYLIETEEELKKEWFLDKKHCGISAGASTPDWIIQKVIAKIENFRIN.

C12 lines the [4Fe-4S] cluster pocket. (2E)-4-hydroxy-3-methylbut-2-enyl diphosphate contacts are provided by H36 and H70. Dimethylallyl diphosphate-binding residues include H36 and H70. H36 and H70 together coordinate isopentenyl diphosphate. C92 contacts [4Fe-4S] cluster. H120 provides a ligand contact to (2E)-4-hydroxy-3-methylbut-2-enyl diphosphate. H120 provides a ligand contact to dimethylallyl diphosphate. H120 is a binding site for isopentenyl diphosphate. E122 acts as the Proton donor in catalysis. T158 provides a ligand contact to (2E)-4-hydroxy-3-methylbut-2-enyl diphosphate. C186 serves as a coordination point for [4Fe-4S] cluster. Residues S214, N216, and S258 each contribute to the (2E)-4-hydroxy-3-methylbut-2-enyl diphosphate site. Residues S214, N216, and S258 each coordinate dimethylallyl diphosphate. Isopentenyl diphosphate contacts are provided by S214, N216, and S258.

The protein belongs to the IspH family. The cofactor is [4Fe-4S] cluster.

The catalysed reaction is isopentenyl diphosphate + 2 oxidized [2Fe-2S]-[ferredoxin] + H2O = (2E)-4-hydroxy-3-methylbut-2-enyl diphosphate + 2 reduced [2Fe-2S]-[ferredoxin] + 2 H(+). It catalyses the reaction dimethylallyl diphosphate + 2 oxidized [2Fe-2S]-[ferredoxin] + H2O = (2E)-4-hydroxy-3-methylbut-2-enyl diphosphate + 2 reduced [2Fe-2S]-[ferredoxin] + 2 H(+). Its pathway is isoprenoid biosynthesis; dimethylallyl diphosphate biosynthesis; dimethylallyl diphosphate from (2E)-4-hydroxy-3-methylbutenyl diphosphate: step 1/1. It participates in isoprenoid biosynthesis; isopentenyl diphosphate biosynthesis via DXP pathway; isopentenyl diphosphate from 1-deoxy-D-xylulose 5-phosphate: step 6/6. Functionally, catalyzes the conversion of 1-hydroxy-2-methyl-2-(E)-butenyl 4-diphosphate (HMBPP) into a mixture of isopentenyl diphosphate (IPP) and dimethylallyl diphosphate (DMAPP). Acts in the terminal step of the DOXP/MEP pathway for isoprenoid precursor biosynthesis. The chain is 4-hydroxy-3-methylbut-2-enyl diphosphate reductase from Campylobacter jejuni subsp. jejuni serotype O:2 (strain ATCC 700819 / NCTC 11168).